A 238-amino-acid chain; its full sequence is Octanoyltransferase (238 aa).

In terms of domain architecture, BPL/LPL catalytic spans 44–224; that stretch reads AGGPDSLLLL…AVLDALDGRI (181 aa). Substrate is bound by residues 82–89, 154–156, and 167–169; these read RGGKITWH, AIG, and GFA. The active-site Acyl-thioester intermediate is Cys-185.

Belongs to the LipB family.

It localises to the cytoplasm. The catalysed reaction is octanoyl-[ACP] + L-lysyl-[protein] = N(6)-octanoyl-L-lysyl-[protein] + holo-[ACP] + H(+). The protein operates within protein modification; protein lipoylation via endogenous pathway; protein N(6)-(lipoyl)lysine from octanoyl-[acyl-carrier-protein]: step 1/2. Its function is as follows. Catalyzes the transfer of endogenously produced octanoic acid from octanoyl-acyl-carrier-protein onto the lipoyl domains of lipoate-dependent enzymes. Lipoyl-ACP can also act as a substrate although octanoyl-ACP is likely to be the physiological substrate. The chain is Octanoyltransferase from Mycolicibacterium gilvum (strain PYR-GCK) (Mycobacterium gilvum (strain PYR-GCK)).